The following is a 186-amino-acid chain: Large ribosomal subunit protein eL18 (186 aa).

The protein belongs to the eukaryotic ribosomal protein eL18 family. As to quaternary structure, component of the large ribosomal subunit. Mature ribosomes consist of a small (40S) and a large (60S) subunit. The 40S subunit contains about 32 different proteins and 1 molecule of RNA (18S). The 60S subunit contains 45 different proteins and 3 molecules of RNA (25S, 5.8S and 5S).

Its subcellular location is the cytoplasm. Its function is as follows. Component of the ribosome, a large ribonucleoprotein complex responsible for the synthesis of proteins in the cell. The small ribosomal subunit (SSU) binds messenger RNAs (mRNAs) and translates the encoded message by selecting cognate aminoacyl-transfer RNA (tRNA) molecules. The large subunit (LSU) contains the ribosomal catalytic site termed the peptidyl transferase center (PTC), which catalyzes the formation of peptide bonds, thereby polymerizing the amino acids delivered by tRNAs into a polypeptide chain. The nascent polypeptides leave the ribosome through a tunnel in the LSU and interact with protein factors that function in enzymatic processing, targeting, and the membrane insertion of nascent chains at the exit of the ribosomal tunnel. This is Large ribosomal subunit protein eL18 from Candida albicans (strain SC5314 / ATCC MYA-2876) (Yeast).